We begin with the raw amino-acid sequence, 65 residues long: MSSKLKGPDGRLPDRLPDGRPAVSWERRWTEGQLPLWLVATAGGIAVIFVLGIFFYGSYTGVGSA.

Residues 1–18 (MSSKLKGPDGRLPDRLPD) show a composition bias toward basic and acidic residues. The segment at 1 to 21 (MSSKLKGPDGRLPDRLPDGRP) is disordered. A helical membrane pass occupies residues 36 to 56 (LWLVATAGGIAVIFVLGIFFY).

It belongs to the PsbJ family. PSII is composed of 1 copy each of membrane proteins PsbA, PsbB, PsbC, PsbD, PsbE, PsbF, PsbH, PsbI, PsbJ, PsbK, PsbL, PsbM, PsbT, PsbX, PsbY, Psb30/Ycf12, peripheral proteins PsbO, CyanoQ (PsbQ), PsbU, PsbV and a large number of cofactors. It forms dimeric complexes.

The protein resides in the cellular thylakoid membrane. Its function is as follows. One of the components of the core complex of photosystem II (PSII). PSII is a light-driven water:plastoquinone oxidoreductase that uses light energy to abstract electrons from H(2)O, generating O(2) and a proton gradient subsequently used for ATP formation. It consists of a core antenna complex that captures photons, and an electron transfer chain that converts photonic excitation into a charge separation. The sequence is that of Photosystem II reaction center protein J from Prochlorococcus marinus (strain SARG / CCMP1375 / SS120).